A 442-amino-acid polypeptide reads, in one-letter code: tRNA modification GTPase MnmE (442 aa).

3 residues coordinate (6S)-5-formyl-5,6,7,8-tetrahydrofolate: R21, E79, and K118. Residues 214-367 enclose the TrmE-type G domain; it reads GFKIAIIGKP…LKEELQNYLN (154 aa). N224 is a K(+) binding site. GTP contacts are provided by residues 224 to 229, 243 to 249, and 268 to 271; these read NVGKSS, SDIAGTT, and DTAG. Residue S228 coordinates Mg(2+). Residues S243, I245, and T248 each coordinate K(+). T249 lines the Mg(2+) pocket. Residue K442 participates in (6S)-5-formyl-5,6,7,8-tetrahydrofolate binding.

It belongs to the TRAFAC class TrmE-Era-EngA-EngB-Septin-like GTPase superfamily. TrmE GTPase family. In terms of assembly, homodimer. Heterotetramer of two MnmE and two MnmG subunits. The cofactor is K(+).

Its subcellular location is the cytoplasm. Functionally, exhibits a very high intrinsic GTPase hydrolysis rate. Involved in the addition of a carboxymethylaminomethyl (cmnm) group at the wobble position (U34) of certain tRNAs, forming tRNA-cmnm(5)s(2)U34. This is tRNA modification GTPase MnmE from Campylobacter jejuni subsp. doylei (strain ATCC BAA-1458 / RM4099 / 269.97).